A 64-amino-acid chain; its full sequence is Movement protein TGBp3 (64 aa).

Residues 1-4 (MRSV) are Lumenal-facing. The chain crosses the membrane as a helical span at residues 5–27 (ALTLCAIIAGYLLVSNLQNVFSP). The Cytoplasmic portion of the chain corresponds to 28-64 (EVCTLVITGESIRINGCNLSPAHFRAISHLKVLQIHL).

The protein belongs to the Tymovirales TGBp3 protein family.

The protein localises to the host endoplasmic reticulum membrane. In terms of biological role, plays a role in viral cell-to-cell propagation, by facilitating genome transport to neighboring plant cells through plasmosdesmata. May induce the formation of granular vesicles derived from the Endoplasmic reticulum, which align on actin filaments. This is Movement protein TGBp3 from Lily symptomless virus (LSV).